A 468-amino-acid chain; its full sequence is MDSFEDKLQQLREAFKEGRTRSAEFRAAQLQGLSHFLRDNKQQLQEALAQDLHKSAFEAEVSEIAISQAEVDLALRNLRSWMKDEKVSKNLATQLDSAFIRKEPFGLVLIIVPWNYPINLTLVPLVGAIAAGNCVVLKPSEISKATEKILAEVLPRYLDQSCFTVVLGGRQETGQLLEHKFDYIFFTGNAYVGKIVMAAAAKHLTPITLELGGKNPCYVDDNCDPQIVANRVAWFRYFNAGQTCVAPDYILCSQEMQERLVPALQNAITRFYGDNPQTSPNLGRIINQKHFKRLQGLLGCGRVAIGGQSDEGERYIAPTVLVDVQETEPVMQEEIFGPILPLVTVRSLDEAIEFMNRREKPLALYAFSKRSQVIKQVLARTSSGGFCGNDGFMHMTLSSLPFGGVGTSGMGRYHGKFSFDTFSNQRACLLRSPGMEKINDLRYPPYSSRNLRVLLVAMEERCCSCTLL.

Methionine 1 bears the N-acetylmethionine mark. 188-193 (GNAYVG) serves as a coordination point for NAD(+). Active-site residues include glutamate 210 and cysteine 244. S-palmitoyl cysteine attachment occurs at residues cysteine 462 and cysteine 463. Position 465 is a cysteine methyl ester (cysteine 465). Cysteine 465 carries S-geranylgeranyl cysteine lipidation. A propeptide spans 466 to 468 (TLL) (removed in mature form).

Belongs to the aldehyde dehydrogenase family. Post-translationally, dually lipidated in the C-terminus; prenylation occurs prior to, and is a prerequisite for palmitoylation. It is also required for activity towards long-chain substrates. Highly expressed in kidney and liver. In brain is expressed at moderate levels in cortex, striatum and hippocampus, and at lower levels in brainstem and cerebellum.

Its subcellular location is the cell membrane. The catalysed reaction is an aldehyde + NAD(+) + H2O = a carboxylate + NADH + 2 H(+). It carries out the reaction a long-chain fatty aldehyde + NAD(+) + H2O = a long-chain fatty acid + NADH + 2 H(+). It catalyses the reaction a medium-chain fatty aldehyde + NAD(+) + H2O = a medium-chain fatty acid + NADH + 2 H(+). The enzyme catalyses octanal + NAD(+) + H2O = octanoate + NADH + 2 H(+). The catalysed reaction is nonanal + NAD(+) + H2O = nonanoate + NADH + 2 H(+). It carries out the reaction hexadecanoate + NADH + 2 H(+) = hexadecanal + NAD(+) + H2O. It catalyses the reaction (2E)-octenal + NAD(+) + H2O = (2E)-octenoate + NADH + 2 H(+). The enzyme catalyses (E)-non-2-enal + NAD(+) + H2O = (E)-non-2-enoate + NADH + 2 H(+). The catalysed reaction is (E)-4-hydroxynon-2-enal + NAD(+) + H2O = (E)-4-hydroxynon-2-enoate + NADH + 2 H(+). It carries out the reaction (2E)-hexadecenal + NAD(+) + H2O = (E)-hexadec-2-enoate + NADH + 2 H(+). It catalyses the reaction benzaldehyde + NAD(+) + H2O = benzoate + NADH + 2 H(+). The enzyme catalyses an aldehyde + NADP(+) + H2O = a carboxylate + NADPH + 2 H(+). The catalysed reaction is a medium-chain fatty aldehyde + NADP(+) + H2O = a medium-chain fatty acid + NADPH + 2 H(+). It carries out the reaction hexanal + NADP(+) + H2O = hexanoate + NADPH + 2 H(+). It catalyses the reaction octanal + NADP(+) + H2O = octanoate + NADPH + 2 H(+). The enzyme catalyses nonanal + NADP(+) + H2O = nonanoate + NADPH + 2 H(+). The catalysed reaction is (2E)-octenal + NADP(+) + H2O = (2E)-octenoate + NADPH + 2 H(+). It carries out the reaction (E)-non-2-enal + NADP(+) + H2O = (E)-non-2-enoate + NADPH + 2 H(+). It catalyses the reaction (E)-4-hydroxynon-2-enal + NADP(+) + H2O = (E)-4-hydroxynon-2-enoate + NADPH + 2 H(+). The enzyme catalyses benzaldehyde + NADP(+) + H2O = benzoate + NADPH + 2 H(+). It participates in alcohol metabolism; ethanol degradation; acetate from ethanol: step 2/2. In terms of biological role, oxidizes medium and long chain saturated and unsaturated fatty aldehydes generated in the plasma membrane into non-toxic fatty acids. May have a protective role against the cytotoxicity induced by lipid peroxidation. Short-chain fatty aldehydes are not good substrates. Can use both NADP(+) and NAD(+) as electron acceptor in vitro, however in vivo preference will depend on their tissue levels. Low activity towards acetaldehyde and 3,4-dihydroxyphenylacetaldehyde. Able to metabolize aromatic aldehydes such as benzaldehyde to their acid form. The chain is Aldehyde dehydrogenase family 3 member B1 (Aldh3b1) from Mus musculus (Mouse).